Consider the following 112-residue polypeptide: MAEDIEEIRRRKLMELQKKYLEQQKAQEEAERQQALIEAQIQAILRRILTPEARERLARVKLVKPELARQVELILVQLYQAGQITEKIDDAKMKKILAQIEARTRREFRIKW.

It belongs to the PDCD5 family.

The chain is DNA-binding protein PF1087 from Pyrococcus furiosus (strain ATCC 43587 / DSM 3638 / JCM 8422 / Vc1).